The primary structure comprises 246 residues: Adenosylcobinamide-GDP ribazoletransferase (246 aa).

7 helical membrane passes run Val-30–Ala-50, Gly-51–Val-71, Val-105–Ala-125, Gly-131–Ile-151, Ile-167–Tyr-189, Leu-193–Ser-210, and Gly-226–Leu-246.

It belongs to the CobS family. Mg(2+) serves as cofactor.

The protein resides in the cell membrane. The enzyme catalyses alpha-ribazole + adenosylcob(III)inamide-GDP = adenosylcob(III)alamin + GMP + H(+). It catalyses the reaction alpha-ribazole 5'-phosphate + adenosylcob(III)inamide-GDP = adenosylcob(III)alamin 5'-phosphate + GMP + H(+). It participates in cofactor biosynthesis; adenosylcobalamin biosynthesis; adenosylcobalamin from cob(II)yrinate a,c-diamide: step 7/7. In terms of biological role, joins adenosylcobinamide-GDP and alpha-ribazole to generate adenosylcobalamin (Ado-cobalamin). Also synthesizes adenosylcobalamin 5'-phosphate from adenosylcobinamide-GDP and alpha-ribazole 5'-phosphate. The sequence is that of Adenosylcobinamide-GDP ribazoletransferase from Brevibacillus brevis (strain 47 / JCM 6285 / NBRC 100599).